The primary structure comprises 158 residues: Large ribosomal subunit protein uL15 (158 aa).

The span at 1–13 (MKLNEIKDNEGST) shows a compositional bias: basic and acidic residues. The tract at residues 1–45 (MKLNEIKDNEGSTHSRKRLGRGIGSGSGKTGGRGVKGQKSRSGVA) is disordered. Residues 21-35 (RGIGSGSGKTGGRGV) are compositionally biased toward gly residues.

It belongs to the universal ribosomal protein uL15 family. In terms of assembly, part of the 50S ribosomal subunit.

In terms of biological role, binds to the 23S rRNA. This chain is Large ribosomal subunit protein uL15, found in Rhizobium johnstonii (strain DSM 114642 / LMG 32736 / 3841) (Rhizobium leguminosarum bv. viciae).